The following is a 910-amino-acid chain: Leucine--tRNA ligase (910 aa).

The short motif at 50 to 60 (PYTNGSLHVGH) is the 'HIGH' region element. The 'KMSKS' region motif lies at 611-615 (KISKS). Lys-614 is an ATP binding site.

The protein belongs to the class-I aminoacyl-tRNA synthetase family.

The protein resides in the cytoplasm. The catalysed reaction is tRNA(Leu) + L-leucine + ATP = L-leucyl-tRNA(Leu) + AMP + diphosphate. The protein is Leucine--tRNA ligase of Thermoplasma acidophilum (strain ATCC 25905 / DSM 1728 / JCM 9062 / NBRC 15155 / AMRC-C165).